The following is a 527-amino-acid chain: MHSTNLLLEEPIRMASILEPSKPSFFPAMTKIVGTLGPKSRSVDTISSCLKAGMSVARFDFSWGDAEYHQETLENLKVAIKSTKKLCAVMLDTVGPELQVVNKSEASISLEENGTVILTPDQGQEASSQVLPINFAGLAKAVKPGDTIFVGQYLFTGSETTSVWLEVSQIKGDDVVCVIKNTATLAGSLFTLHCSQIHIDLPTLSDEDKEVIRKWGAPNKIDFLSLSYTRHVEDVRQAREFLSKLGDLSQTQIFAKIENVEGLNNFDEILQEADGIILSRGNLGIDLPPEKVFLFQKSALHKCNMAGKPAVVTRVVDSMTDNLRPTRAEATDVANAVLDGSDAILLGAETLRGLYPVETISIVGKICAEAEKVFNQDLYFKRTVKHVGEPMTHLESIASSAVRAAIKVKASVIICFTSSGRAARLIAKYRPTMPVLSVVIPRLKTNQLRWSFTGAFEARQSLIVRGLFPMLADPRHPAESTNATNESVLKVALDHGKVSGVIKSHDRVVVCQKVGDSSVVKIIELDD.

Arginine 58 provides a ligand contact to substrate. 4 residues coordinate K(+): aspartate 60, serine 62, aspartate 92, and threonine 93. 60-63 (DFSW) provides a ligand contact to ATP. Lysine 256 contacts substrate. Residue glutamate 258 coordinates Mg(2+). Residues glycine 281, asparagine 282, and threonine 313 each coordinate substrate. Residue asparagine 282 coordinates Mg(2+).

This sequence belongs to the pyruvate kinase family. Homotetramer. The cofactor is Mg(2+). Requires K(+) as cofactor.

Its subcellular location is the cytoplasm. It localises to the cytosol. The enzyme catalyses pyruvate + ATP = phosphoenolpyruvate + ADP + H(+). The protein operates within carbohydrate degradation; glycolysis; pyruvate from D-glyceraldehyde 3-phosphate: step 5/5. Its function is as follows. Key regulatory enzyme of the glycolytic pathway that catalyzes the final step of glycolysis, converting ADP and phosphoenolpyruvate (PEP) to ATP and pyruvate by essentially irreversible transphosphorylation. The protein is Pyruvate kinase 2, cytosolic of Oryza sativa subsp. indica (Rice).